Consider the following 137-residue polypeptide: Large ribosomal subunit protein bL17 (137 aa).

The protein belongs to the bacterial ribosomal protein bL17 family. As to quaternary structure, part of the 50S ribosomal subunit. Contacts protein L32.

In Bradyrhizobium sp. (strain BTAi1 / ATCC BAA-1182), this protein is Large ribosomal subunit protein bL17.